A 306-amino-acid polypeptide reads, in one-letter code: Glutaminase (306 aa).

Ser61, Asn111, Glu155, Asn162, Tyr186, Tyr238, and Val256 together coordinate substrate.

The protein belongs to the glutaminase family. In terms of assembly, homotetramer.

The catalysed reaction is L-glutamine + H2O = L-glutamate + NH4(+). The protein is Glutaminase of Pseudomonas entomophila (strain L48).